The chain runs to 240 residues: MNAEKSPVNHNVDHEEIAKFEAVASRWWDLEGEFKPLHRINPLRLGYIAERAGGLFGKKVLDVGCGGGILAESMAREGATVTGLDMGFEPLQVAKLHALESGIQVDYVQETVEEHAAKHAGQYDVVTCMEMLEHVPDPQSVVRACAQLVKPGGDVFFSTLNRNGKSWLMAVVGAEHILRMVPKGTHDVKKFIKPAELLGWVDQTSLKERHITGLHYNPITNTFKLGPGVDVNYMLHTQNK.

Arg44, Gly64, Asp85, and Met129 together coordinate S-adenosyl-L-methionine.

It belongs to the methyltransferase superfamily. UbiG/COQ3 family.

The catalysed reaction is a 3-demethylubiquinol + S-adenosyl-L-methionine = a ubiquinol + S-adenosyl-L-homocysteine + H(+). It catalyses the reaction a 3-(all-trans-polyprenyl)benzene-1,2-diol + S-adenosyl-L-methionine = a 2-methoxy-6-(all-trans-polyprenyl)phenol + S-adenosyl-L-homocysteine + H(+). The protein operates within cofactor biosynthesis; ubiquinone biosynthesis. O-methyltransferase that catalyzes the 2 O-methylation steps in the ubiquinone biosynthetic pathway. This is Ubiquinone biosynthesis O-methyltransferase from Escherichia coli O9:H4 (strain HS).